A 182-amino-acid polypeptide reads, in one-letter code: Transcription termination/antitermination protein NusG (182 aa).

The KOW domain occupies 131-163 (VGEQVRIKSGPFANQVGEVQEIETDKFKLTVLV).

It belongs to the NusG family.

Participates in transcription elongation, termination and antitermination. This is Transcription termination/antitermination protein NusG from Staphylococcus aureus (strain NCTC 8325 / PS 47).